A 58-amino-acid chain; its full sequence is Teratocyte protein CftICK-III (58 aa).

Positions 1-24 (MQKFMRLFFLGLFFILFMTTQIKA) are cleaved as a signal peptide. Cystine bridges form between C27/C42, C34/C47, and C41/C55.

Abundantly expressed by teratocytes, which are extra-embryonic cells released by parasitoid wasps into their hosts during larval eclosion.

It localises to the secreted. This endoparasitoid wasp peptide has immununosuppressive and insecticidal activities. Suppress cellular immunity which is detectable as a reduction of hemocyte encapsulation in the host. In vivo, ingestion of this peptide (probably at excessive doses) increases larval mortality and reduces leaf consumption in both lepidopteran species D.saccharalis and S.frugiperda, which are permissive and non-permissive hosts for C.flavipes, respectively. In Cotesia flavipes (Parasitic wasp), this protein is Teratocyte protein CftICK-III.